The following is a 91-amino-acid chain: Potassium channel toxin TstKMK (91 aa).

The signal sequence occupies residues 1-25 (MVATNRCCVFALLFALLLVHSLTEA). A propeptide spanning residues 26–42 (GKGKEILGKIKEKIIEA) is cleaved from the precursor. Positions 58 to 91 (EYACPAIDKFCEDHCAAKKAVGKCDDFKCKCIKL) constitute a BetaSPN-type CS-alpha/beta domain. Disulfide bonds link cysteine 61/cysteine 81, cysteine 68/cysteine 86, and cysteine 72/cysteine 88.

Belongs to the long chain scorpion toxin family. Class 2 subfamily. Expressed by the venom gland.

It is found in the secreted. In terms of biological role, the full peptide presents antibacterial and cytotoxic activities. The synthetic C-terminus (AA 33-76) inhibits voltage-gated potassium channels Kv1.1/KCNA1, Kv1.2/KCNA2, and Kv1.3/KCNA3. The chain is Potassium channel toxin TstKMK from Tityus stigmurus (Brazilian scorpion).